The chain runs to 264 residues: Regulatory protein RecX (264 aa).

The protein belongs to the RecX family.

The protein localises to the cytoplasm. Functionally, modulates RecA activity. The protein is Regulatory protein RecX of Limosilactobacillus reuteri (strain DSM 20016) (Lactobacillus reuteri).